The primary structure comprises 688 residues: Polyribonucleotide nucleotidyltransferase (688 aa).

Mg(2+) contacts are provided by aspartate 484 and aspartate 490. One can recognise a KH domain in the interval 550–609; the sequence is PTTEIFNVAPDKIVEIIGQGGRVIKEIVEKFEVKIDLNKPSGEVKIMGNKERVLKTKEFI. The 63-residue stretch at 626-688 folds into the S1 motif domain; the sequence is DEVLEAQVKR…NKGKIALDLA (63 aa).

The protein belongs to the polyribonucleotide nucleotidyltransferase family. Mg(2+) serves as cofactor.

It is found in the cytoplasm. The enzyme catalyses RNA(n+1) + phosphate = RNA(n) + a ribonucleoside 5'-diphosphate. Involved in mRNA degradation. Catalyzes the phosphorolysis of single-stranded polyribonucleotides processively in the 3'- to 5'-direction. This chain is Polyribonucleotide nucleotidyltransferase, found in Helicobacter pylori (strain G27).